The following is a 190-amino-acid chain: Translation initiation factor IF-3 (190 aa).

It belongs to the IF-3 family. In terms of assembly, monomer.

The protein resides in the cytoplasm. In terms of biological role, IF-3 binds to the 30S ribosomal subunit and shifts the equilibrium between 70S ribosomes and their 50S and 30S subunits in favor of the free subunits, thus enhancing the availability of 30S subunits on which protein synthesis initiation begins. This is Translation initiation factor IF-3 from Prochlorococcus marinus subsp. pastoris (strain CCMP1986 / NIES-2087 / MED4).